The following is a 420-amino-acid chain: MNIFNNNLHETDKEINEIIKHEKLRQSSVIELIASENFVSPAVLEAQGSILTNKYAEGYSGKRFYNGCEEVDKAENLAIERVKKLFNCKYANVQPHSGSQANQAVYLTLLQPGDTILGMSLDSGGHLTHGASPNMSGKWFNAVSYGVNKKTYLIDYDEIERLAVLHKPKLLIAGFSAYPRNIDFTRFREIADKVGAYFMADIAHIAGLVATGEHQSPISYAHVVTSTTHKTLRGPRGGLVLSDDEEIGKKINSALFPGLQGGPLMHIVAAKAVAFLESLQPEYKSYIKQIISNAKALASSLQERGYDILTGGTDNHIVLVDLRKNGITGKLAANSLDNAGITCNKNAIPFDETSPFITSGIRLGTPACTTRGFKEQDFVSVGHMVADILDGLKNNKDNTKAEQQVLHKVTKLIKLFPFYD.

Residues L121 and G125–L127 each bind (6S)-5,6,7,8-tetrahydrofolate. Residue K230 is modified to N6-(pyridoxal phosphate)lysine. (6S)-5,6,7,8-tetrahydrofolate contacts are provided by residues E246 and S354–F356.

This sequence belongs to the SHMT family. Homodimer. Requires pyridoxal 5'-phosphate as cofactor.

It is found in the cytoplasm. The catalysed reaction is (6R)-5,10-methylene-5,6,7,8-tetrahydrofolate + glycine + H2O = (6S)-5,6,7,8-tetrahydrofolate + L-serine. It functions in the pathway one-carbon metabolism; tetrahydrofolate interconversion. The protein operates within amino-acid biosynthesis; glycine biosynthesis; glycine from L-serine: step 1/1. Functionally, catalyzes the reversible interconversion of serine and glycine with tetrahydrofolate (THF) serving as the one-carbon carrier. This reaction serves as the major source of one-carbon groups required for the biosynthesis of purines, thymidylate, methionine, and other important biomolecules. Also exhibits THF-independent aldolase activity toward beta-hydroxyamino acids, producing glycine and aldehydes, via a retro-aldol mechanism. This Rickettsia akari (strain Hartford) protein is Serine hydroxymethyltransferase.